The chain runs to 185 residues: Elongation factor P (185 aa).

It belongs to the elongation factor P family.

The protein localises to the cytoplasm. It participates in protein biosynthesis; polypeptide chain elongation. In terms of biological role, involved in peptide bond synthesis. Stimulates efficient translation and peptide-bond synthesis on native or reconstituted 70S ribosomes in vitro. Probably functions indirectly by altering the affinity of the ribosome for aminoacyl-tRNA, thus increasing their reactivity as acceptors for peptidyl transferase. In Trichormus variabilis (strain ATCC 29413 / PCC 7937) (Anabaena variabilis), this protein is Elongation factor P.